Reading from the N-terminus, the 88-residue chain is Arminin 1b (88 aa).

A signal peptide spans 1 to 18; sequence MKTVLAFLFLTFIAFTHA. Residues 19 to 57 constitute a propeptide that is removed on maturation; it reads ESYEDVKEEIKNEVEREIFEDLEEESDVLESNVRELNDA. Residue Val85 is modified to Valine amide.

Belongs to the arminin family. As to expression, expressed in entodermal epithelium along the body column.

It localises to the secreted. The protein localises to the target cell membrane. Functionally, antimicrobial peptide with a broad-spectrum antimicrobial activity. Keeps its antibacterial activity under a wide range of salt concentrations that mimic physiological conditions of human blood, which is surprising, since Hydra is an obligate freshwater animal with nearly no salt tolerance. Does not affect red blood cells. In Hydra vulgaris (Hydra), this protein is Arminin 1b.